The primary structure comprises 577 residues: Arginine--tRNA ligase (577 aa).

Residues 124-132 carry the 'HIGH' region motif; it reads VAKEMHVGH.

It belongs to the class-I aminoacyl-tRNA synthetase family. In terms of assembly, monomer.

The protein localises to the cytoplasm. The enzyme catalyses tRNA(Arg) + L-arginine + ATP = L-arginyl-tRNA(Arg) + AMP + diphosphate. This Salmonella typhi protein is Arginine--tRNA ligase.